The chain runs to 487 residues: Cyclic AMP-dependent transcription factor ATF-2 (487 aa).

The segment at 7–31 (FLCTAPGCGQRFTNEDHLAVHKHKH) adopts a C2H2-type zinc-finger fold. Threonine 34 is modified (phosphothreonine; by PKC/PRKCH). The residue at position 44 (serine 44) is a Phosphoserine. Phosphothreonine; by MAPK11 and MAPK14 is present on threonine 51. Threonine 53 carries the phosphothreonine; by MAPK1, MAPK3, MAPK11, MAPK12, MAPK14 and PLK3 modification. Threonine 55 carries the phosphothreonine; by VRK1 modification. Residues serine 72 and serine 94 each carry the phosphoserine modification. Residue threonine 98 is modified to Phosphothreonine. At serine 103 the chain carries Phosphoserine; by PKC/PRKCA and PKC/PRKCB. 2 disordered regions span residues 106–137 (EEPS…PLAQ) and 241–355 (PGIP…RQKR). Serine 118 is modified (phosphoserine). Over residues 264–275 (LTQQHPPVTNGD) the composition is skewed to polar residues. Residues 278–281 (KGHG) form an essential for its histone acetyltransferase activity region. Over residues 300-316 (PATSTTETPASPAHTTP) the composition is skewed to low complexity. Residue serine 310 is modified to Phosphoserine. The residue at position 322 (serine 322) is a Phosphoserine; by PKC/PRKCA and PKC/PRKCB. Basic and acidic residues predominate over residues 328–345 (AANEDPDEKRRKFLERNR). The bZIP domain maps to 334–397 (DEKRRKFLER…AQLKQLLLAH (64 aa)). A basic motif region spans residues 336–356 (KRRKFLERNRAAASRCRQKRK). N6-acetyllysine is present on lysine 339. Residue serine 349 is modified to Phosphoserine; by PKC/PRKCA and PKC/PRKCB. Lysine 356 is modified (N6-acetyllysine). The segment at 362 to 390 (LEKKAEDLSSLNGQLQSEVTLLRNEVAQL) is leucine-zipper. Residues 387-396 (VAQLKQLLLA) carry the Nuclear export signal motif. The interval 407–453 (KKSGYHTADKDDSSEDLSVPSSPHTEAIQHSSVSTSNGVSSTSKAEA) is disordered. A phosphoserine mark is found at serine 424 and serine 428. Positions 425–436 (VPSSPHTEAIQH) are enriched in polar residues. The segment covering 437–449 (SSVSTSNGVSSTS) has biased composition (low complexity). 2 positions are modified to phosphoserine; by ATM: serine 472 and serine 480.

The protein belongs to the bZIP family. ATF subfamily. In terms of assembly, binds DNA as a dimer and can form a homodimer in the absence of DNA. Can form a heterodimer with JUN. Heterodimerization is essential for its transcriptional activity. Interacts with SMAD3 and SMAD4. Interacts with the HK1/VDAC1 complex. Interacts with NBN, MRE11, XPO1, KAT5 and CUL3. Binds through its N-terminal region to UTF1 which acts as a coactivator of ATF2 transcriptional activity. In terms of processing, phosphorylation of Thr-51 by MAPK14 and MAPK11, and at Thr-53 by MAPK1/ERK2, MAPK3/ERK1, MAPK11, MAPK12 and MAPK14 in response to external stimulus like insulin causes increased transcriptional activity. Phosphorylated by PLK3 following hyperosmotic stress. Also phosphorylated and activated by JNK and CaMK4. ATM-mediated phosphorylation at Ser-472 and Ser-480 stimulates its function in DNA damage response. Phosphorylation at Ser-44, Thr-55 and Ser-103 activates its transcriptional activity. Phosphorylation at Thr-51 or Thr-53 enhances acetylation of histones H2B and H4.

It is found in the nucleus. The protein localises to the cytoplasm. It localises to the mitochondrion outer membrane. Transcriptional activator which regulates the transcription of various genes, including those involved in anti-apoptosis, cell growth, and DNA damage response. Dependent on its binding partner, binds to CRE (cAMP response element) consensus sequences (5'-TGACGTCA-3') or to AP-1 (activator protein 1) consensus sequences (5'-TGACTCA-3'). In the nucleus, contributes to global transcription and the DNA damage response, in addition to specific transcriptional activities that are related to cell development, proliferation and death. In the cytoplasm, interacts with and perturbs HK1- and VDAC1-containing complexes at the mitochondrial outer membrane, thereby impairing mitochondrial membrane potential, inducing mitochondrial leakage and promoting cell death. The phosphorylated form (mediated by ATM) plays a role in the DNA damage response and is involved in the ionizing radiation (IR)-induced S phase checkpoint control and in the recruitment of the MRN complex into the IR-induced foci (IRIF). Exhibits histone acetyltransferase (HAT) activity which specifically acetylates histones H2B and H4 in vitro. In concert with CUL3 and RBX1, promotes the degradation of KAT5 thereby attenuating its ability to acetylate and activate ATM. Can elicit oncogenic or tumor suppressor activities depending on the tissue or cell type. This is Cyclic AMP-dependent transcription factor ATF-2 (Atf2) from Mus musculus (Mouse).